We begin with the raw amino-acid sequence, 268 residues long: 4-hydroxy-tetrahydrodipicolinate reductase (268 aa).

NAD(+)-binding positions include 8-13 (GAAGRM) and Asp35. An NADP(+)-binding site is contributed by Arg36. Residues 99-101 (GTT) and 123-126 (AANF) each bind NAD(+). Residue His156 is the Proton donor/acceptor of the active site. His157 serves as a coordination point for (S)-2,3,4,5-tetrahydrodipicolinate. Lys160 acts as the Proton donor in catalysis. Residue 166–167 (GT) coordinates (S)-2,3,4,5-tetrahydrodipicolinate.

It belongs to the DapB family.

The protein resides in the cytoplasm. The catalysed reaction is (S)-2,3,4,5-tetrahydrodipicolinate + NAD(+) + H2O = (2S,4S)-4-hydroxy-2,3,4,5-tetrahydrodipicolinate + NADH + H(+). The enzyme catalyses (S)-2,3,4,5-tetrahydrodipicolinate + NADP(+) + H2O = (2S,4S)-4-hydroxy-2,3,4,5-tetrahydrodipicolinate + NADPH + H(+). Its pathway is amino-acid biosynthesis; L-lysine biosynthesis via DAP pathway; (S)-tetrahydrodipicolinate from L-aspartate: step 4/4. Catalyzes the conversion of 4-hydroxy-tetrahydrodipicolinate (HTPA) to tetrahydrodipicolinate. This is 4-hydroxy-tetrahydrodipicolinate reductase from Pseudomonas aeruginosa (strain LESB58).